The sequence spans 285 residues: Dihydropteroate synthase (285 aa).

The Pterin-binding domain occupies T25–K271. N32 provides a ligand contact to Mg(2+). (7,8-dihydropterin-6-yl)methyl diphosphate contacts are provided by residues T72, D106, N125, D189, K225, and R259–H261.

It belongs to the DHPS family. Requires Mg(2+) as cofactor.

The catalysed reaction is (7,8-dihydropterin-6-yl)methyl diphosphate + 4-aminobenzoate = 7,8-dihydropteroate + diphosphate. It participates in cofactor biosynthesis; tetrahydrofolate biosynthesis; 7,8-dihydrofolate from 2-amino-4-hydroxy-6-hydroxymethyl-7,8-dihydropteridine diphosphate and 4-aminobenzoate: step 1/2. In terms of biological role, catalyzes the condensation of para-aminobenzoate (pABA) with 6-hydroxymethyl-7,8-dihydropterin diphosphate (DHPt-PP) to form 7,8-dihydropteroate (H2Pte), the immediate precursor of folate derivatives. The sequence is that of Dihydropteroate synthase (sul) from Bacillus subtilis (strain 168).